The primary structure comprises 634 residues: ATP-dependent clpX-like chaperone, mitochondrial (634 aa).

A mitochondrion-targeting transit peptide spans 1-56 (MSSCGACTCGAAAARLLTTSLTSAQRGISCGRIHVPVLGRLGTTLDAQALRRAPLR). The segment at 69-102 (DGANKDGSGDGNKKSVTEGSSKKSGSGNSGKGGN) is disordered. Residues 70 to 84 (GANKDGSGDGNKKSV) show a composition bias toward basic and acidic residues. Low complexity predominate over residues 85-94 (TEGSSKKSGS). Positions 94-147 (SGNSGKGGNQLRCPKCGDLCTHVETFVSSTRFVKCEKCHHFFVVLSEADSKKSI) constitute a ClpX-type ZB domain. 4 residues coordinate Zn(2+): Cys106, Cys109, Cys128, and Cys131. 295–302 (PTGSGKTL) provides a ligand contact to ATP. Lys438 carries the post-translational modification N6-acetyllysine. A compositionally biased stretch (basic and acidic residues) spans 599–611 (KEPGYIRAPSKES). Positions 599–634 (KEPGYIRAPSKESSEEEYDSGVEEDGWPRQADAANS) are disordered. Positions 612–623 (SEEEYDSGVEED) are enriched in acidic residues. Ser618 carries the phosphoserine modification.

Belongs to the ClpX chaperone family. As to quaternary structure, homohexamer that forms a ring structure; this hexamerization requires ATP binding. Component of the ClpXP complex formed by the assembly of two CLPP heptameric rings with two CLPX hexameric rings, giving rise to a symmetrical structure with two central CLPP rings flanked by a CLPX ring at either end of the complex. Interacts with TFAM. As to expression, detected in liver (at protein level).

It localises to the mitochondrion. It is found in the mitochondrion matrix. The protein resides in the mitochondrion nucleoid. The catalysed reaction is ATP + H2O = ADP + phosphate + H(+). In terms of biological role, ATP-dependent chaperone that functions as an unfoldase. As part of the ClpXP protease complex, it recognizes specific protein substrates, unfolds them using energy derived from ATP hydrolysis, and then translocates them to the proteolytic subunit (CLPP) of the ClpXP complex for degradation. Thanks to its chaperone activity, it also functions in the incorporation of the pyridoxal phosphate cofactor into 5-aminolevulinate synthase, thereby activating 5-aminolevulinate (ALA) synthesis, the first step in heme biosynthesis. This chaperone is also involved in the control of mtDNA nucleoid distribution, by regulating mitochondrial transcription factor A (TFAM) activity. The protein is ATP-dependent clpX-like chaperone, mitochondrial of Mus musculus (Mouse).